The sequence spans 156 residues: Endoribonuclease YbeY (156 aa).

Zn(2+) is bound by residues His115, His119, and His125.

The protein belongs to the endoribonuclease YbeY family. The cofactor is Zn(2+).

It is found in the cytoplasm. Functionally, single strand-specific metallo-endoribonuclease involved in late-stage 70S ribosome quality control and in maturation of the 3' terminus of the 16S rRNA. The polypeptide is Endoribonuclease YbeY (Mannheimia succiniciproducens (strain KCTC 0769BP / MBEL55E)).